The chain runs to 338 residues: Holliday junction branch migration complex subunit RuvB (338 aa).

Residues 4–185 (EDQKILDAKP…FGIVAHMQFY (182 aa)) are large ATPase domain (RuvB-L). ATP contacts are provided by residues L24, R25, G66, K69, T70, T71, 132–134 (EDF), R175, Y185, and R222. T70 contacts Mg(2+). The segment at 186–256 (PVSDLKLIAK…IVDNALNKLH (71 aa)) is small ATPAse domain (RuvB-S). Positions 259–338 (ARGLDETDLK…LQIPYQTGLS (80 aa)) are head domain (RuvB-H). The DNA site is built by R314 and R319.

The protein belongs to the RuvB family. As to quaternary structure, homohexamer. Forms an RuvA(8)-RuvB(12)-Holliday junction (HJ) complex. HJ DNA is sandwiched between 2 RuvA tetramers; dsDNA enters through RuvA and exits via RuvB. An RuvB hexamer assembles on each DNA strand where it exits the tetramer. Each RuvB hexamer is contacted by two RuvA subunits (via domain III) on 2 adjacent RuvB subunits; this complex drives branch migration. In the full resolvosome a probable DNA-RuvA(4)-RuvB(12)-RuvC(2) complex forms which resolves the HJ.

Its subcellular location is the cytoplasm. It catalyses the reaction ATP + H2O = ADP + phosphate + H(+). The RuvA-RuvB-RuvC complex processes Holliday junction (HJ) DNA during genetic recombination and DNA repair, while the RuvA-RuvB complex plays an important role in the rescue of blocked DNA replication forks via replication fork reversal (RFR). RuvA specifically binds to HJ cruciform DNA, conferring on it an open structure. The RuvB hexamer acts as an ATP-dependent pump, pulling dsDNA into and through the RuvAB complex. RuvB forms 2 homohexamers on either side of HJ DNA bound by 1 or 2 RuvA tetramers; 4 subunits per hexamer contact DNA at a time. Coordinated motions by a converter formed by DNA-disengaged RuvB subunits stimulates ATP hydrolysis and nucleotide exchange. Immobilization of the converter enables RuvB to convert the ATP-contained energy into a lever motion, pulling 2 nucleotides of DNA out of the RuvA tetramer per ATP hydrolyzed, thus driving DNA branch migration. The RuvB motors rotate together with the DNA substrate, which together with the progressing nucleotide cycle form the mechanistic basis for DNA recombination by continuous HJ branch migration. Branch migration allows RuvC to scan DNA until it finds its consensus sequence, where it cleaves and resolves cruciform DNA. The sequence is that of Holliday junction branch migration complex subunit RuvB from Oenococcus oeni (strain ATCC BAA-331 / PSU-1).